Consider the following 176-residue polypeptide: Ribosome rescue factor SmrB (176 aa).

Residues 97–172 form the Smr domain; it reads LDMHGMTQQE…GNGALLVLID (76 aa).

It belongs to the SmrB family. Associates with collided ribosomes, but not with correctly translating polysomes.

Acts as a ribosome collision sensor. Detects stalled/collided disomes (pairs of ribosomes where the leading ribosome is stalled and a second ribosome has collided with it) and endonucleolytically cleaves mRNA at the 5' boundary of the stalled ribosome. Stalled/collided disomes form a new interface (primarily via the 30S subunits) that binds SmrB. Cleaved mRNA becomes available for tmRNA ligation, leading to ribosomal subunit dissociation and rescue of stalled ribosomes. The chain is Ribosome rescue factor SmrB from Photobacterium profundum (strain SS9).